The following is a 137-amino-acid chain: CDGSH iron-sulfur domain-containing protein 3, mitochondrial (137 aa).

Lysine 65 is modified (N6-acetyllysine; alternate). Lysine 65 is modified (N6-succinyllysine; alternate). Residues cysteine 70, cysteine 72, cysteine 81, and histidine 85 each contribute to the [2Fe-2S] cluster site. The residue at position 96 (lysine 96) is an N6-acetyllysine. [2Fe-2S] cluster is bound by residues cysteine 108, cysteine 110, cysteine 119, and histidine 123. Position 124 is an N6-acetyllysine; alternate (lysine 124). Position 124 is an N6-succinyllysine; alternate (lysine 124).

The protein belongs to the CISD protein family. In terms of assembly, monomer. The cofactor is [2Fe-2S] cluster.

It localises to the mitochondrion. Can transfer its iron-sulfur clusters to the apoferrodoxins FDX1 and FDX2. Contributes to mitochondrial iron homeostasis and in maintaining normal levels of free iron and reactive oxygen species, and thereby contributes to normal mitochondrial function. The protein is CDGSH iron-sulfur domain-containing protein 3, mitochondrial (Cisd3) of Mus musculus (Mouse).